Consider the following 266-residue polypeptide: 15-hydroxyprostaglandin dehydrogenase [NAD(+)] (266 aa).

NAD(+) is bound by residues 12 to 20 (GAAQGIGKA), 36 to 37 (DW), 63 to 65 (CDV), and asparagine 91. Positions 138 and 148 each coordinate substrate. Tyrosine 151 serves as the catalytic Proton acceptor. Residues 151 to 155 (YCASK) and 186 to 188 (VKT) contribute to the NAD(+) site.

Belongs to the short-chain dehydrogenases/reductases (SDR) family. As to quaternary structure, homodimer.

The protein localises to the cytoplasm. The enzyme catalyses prostaglandin E2 + NAD(+) = 15-oxoprostaglandin E2 + NADH + H(+). The catalysed reaction is (15S)-hydroxy-(5Z,8Z,11Z,13E)-eicosatetraenoate + NAD(+) = 15-oxo-(5Z,8Z,11Z,13E)-eicosatetraenoate + NADH + H(+). It carries out the reaction (11R)-hydroxy-(5Z,8Z,12E,14Z)-eicosatetraenoate + NAD(+) = 11-oxo-(5Z,8Z,12E,14Z)-eicosatetraenoate + NADH + H(+). It catalyses the reaction lipoxin A4 + NAD(+) = 15-oxo-(5S,6R)-dihydroxy-(7E,9E,11Z,13E)-eicosatetraenoate + NADH + H(+). The enzyme catalyses 15-oxo-(5S,6R)-dihydroxy-(7E,9E,11Z)-eicosatrienoate + NADH + H(+) = (5S,6R,15S)-trihydroxy-(7E,9E,11Z)-eicosatrienoate + NAD(+). The catalysed reaction is prostaglandin A1 + NAD(+) = 15-oxo-prostaglandin A1 + NADH + H(+). It carries out the reaction prostaglandin E1 + NAD(+) = 15-oxoprostaglandin E1 + NADH + H(+). It catalyses the reaction 14-hydroxy-(4Z,7Z,10Z,12E,16Z,19Z)-docosahexaenoate + NAD(+) = 14-oxo-(4Z,7Z,10Z,12E,16Z,19Z)-docosahexaenoate + NADH + H(+). The enzyme catalyses resolvin E1 + NAD(+) = 18-oxo-resolvin E1 + NADH + H(+). The catalysed reaction is resolvin D1 + NAD(+) = 8-oxoresolvin D1 + NADH + H(+). It carries out the reaction resolvin D1 + NAD(+) = 17-oxoresolvin D1 + NADH + H(+). It catalyses the reaction resolvin D2 + NAD(+) = 7-oxoresolvin D2 + NADH + H(+). The enzyme catalyses resolvin D2 + NAD(+) = 16-oxoresolvin D2 + NADH + H(+). In terms of biological role, catalyzes the NAD-dependent dehydrogenation (oxidation) of a broad array of hydroxylated polyunsaturated fatty acids (mainly eicosanoids and docosanoids, including prostaglandins, lipoxins and resolvins), yielding their corresponding keto (oxo) metabolites. Decreases the levels of the pro-proliferative prostaglandins such as prostaglandin E2 (whose activity is increased in cancer because of an increase in the expression of cyclooxygenase 2) and generates oxo-fatty acid products that can profoundly influence cell function by abrogating pro-inflammatory cytokine expression. Converts resolvins E1, D1 and D2 to their oxo products, which represents a mode of resolvin inactivation. Resolvin E1 plays important roles during the resolution phase of acute inflammation, while resolvins D1 and D2 have a unique role in obesity-induced adipose inflammation. The polypeptide is 15-hydroxyprostaglandin dehydrogenase [NAD(+)] (Hpgd) (Rattus norvegicus (Rat)).